The sequence spans 822 residues: Anaphase-promoting complex subunit 2 (822 aa).

5 positions are modified to phosphoserine: S218, S314, S470, S534, and S697. The segment at 450-495 (GDLAVELSKTDPASLETGQDSEDDSGEPEDWVPDPVDADPGKSSSK) is disordered. The span at 468 to 481 (QDSEDDSGEPEDWV) shows a compositional bias: acidic residues. A cullin homology region spans residues 502 to 700 (ISLLVSIYGS…LLRRRMSVWL (199 aa)). A Phosphotyrosine modification is found at Y810.

Belongs to the cullin family. In terms of assembly, the mammalian APC/C is composed at least of 14 distinct subunits ANAPC1, ANAPC2, CDC27/APC3, ANAPC4, ANAPC5, CDC16/APC6, ANAPC7, CDC23/APC8, ANAPC10, ANAPC11, CDC26/APC12, ANAPC13, ANAPC15 and ANAPC16 that assemble into a complex of at least 19 chains with a combined molecular mass of around 1.2 MDa; APC/C interacts with FZR1 and FBXO5. In the context of the APC/C complex, directly interacts with UBE2C and UBE2S. Interacts (via cullin domain) with ANAPC11 and with UBCH10. Interacts with NEUROD2. Interacts with FBXO43; the interaction is direct.

It participates in protein modification; protein ubiquitination. Its function is as follows. Together with the RING-H2 protein ANAPC11, constitutes the catalytic component of the anaphase promoting complex/cyclosome (APC/C), a cell cycle-regulated E3 ubiquitin ligase that controls progression through mitosis and the G1 phase of the cell cycle. The APC/C complex acts by mediating ubiquitination and subsequent degradation of target proteins: it mainly mediates the formation of 'Lys-11'-linked polyubiquitin chains and, to a lower extent, the formation of 'Lys-48'- and 'Lys-63'-linked polyubiquitin chains. The APC/C complex catalyzes assembly of branched 'Lys-11'-/'Lys-48'-linked branched ubiquitin chains on target proteins. The CDC20-APC/C complex positively regulates the formation of synaptic vesicle clustering at active zone to the presynaptic membrane in postmitotic neurons. CDC20-APC/C-induced degradation of NEUROD2 drives presynaptic differentiation. This chain is Anaphase-promoting complex subunit 2 (ANAPC2), found in Homo sapiens (Human).